We begin with the raw amino-acid sequence, 375 residues long: Succinyl-diaminopimelate desuccinylase (375 aa).

Position 66 (His-66) interacts with Zn(2+). Asp-68 is an active-site residue. Asp-99 provides a ligand contact to Zn(2+). The active-site Proton acceptor is Glu-133. Zn(2+)-binding residues include Glu-134, Glu-162, and His-348.

It belongs to the peptidase M20A family. DapE subfamily. As to quaternary structure, homodimer. The cofactor is Zn(2+). It depends on Co(2+) as a cofactor.

It carries out the reaction N-succinyl-(2S,6S)-2,6-diaminopimelate + H2O = (2S,6S)-2,6-diaminopimelate + succinate. The protein operates within amino-acid biosynthesis; L-lysine biosynthesis via DAP pathway; LL-2,6-diaminopimelate from (S)-tetrahydrodipicolinate (succinylase route): step 3/3. Catalyzes the hydrolysis of N-succinyl-L,L-diaminopimelic acid (SDAP), forming succinate and LL-2,6-diaminopimelate (DAP), an intermediate involved in the bacterial biosynthesis of lysine and meso-diaminopimelic acid, an essential component of bacterial cell walls. The chain is Succinyl-diaminopimelate desuccinylase from Salmonella choleraesuis (strain SC-B67).